The primary structure comprises 495 residues: Rho GTPase-activating protein 19 (495 aa).

The 207-residue stretch at 98-304 (MSLKRKEKGV…FMIKHSQKLF (207 aa)) folds into the Rho-GAP domain. 2 disordered regions span residues 327 to 362 (KDDL…ETQQ) and 393 to 495 (KHPS…SSSL). 3 stretches are compositionally biased toward basic and acidic residues: residues 350–362 (SRLD…ETQQ), 433–452 (QERK…KENV), and 470–481 (KSLEGQKEESCR).

GTPase activator for the Rho-type GTPases by converting them to an inactive GDP-bound state. The protein is Rho GTPase-activating protein 19 (ARHGAP19) of Gallus gallus (Chicken).